Reading from the N-terminus, the 414-residue chain is Isocitrate dehydrogenase [NADP] cytoplasmic (414 aa).

The residue at position 2 (serine 2) is an N-acetylserine. Tyrosine 42 carries the post-translational modification Phosphotyrosine. 75-77 (TIT) contributes to the NADP(+) binding site. Threonine 77 is a substrate binding site. Lysine 81 carries the N6-acetyllysine modification. Arginine 82 provides a ligand contact to NADP(+). Residues 94 to 100 (SPNGTIR) and arginine 109 contribute to the substrate site. Lysine 126 carries the post-translational modification N6-succinyllysine. Arginine 132 and lysine 212 together coordinate substrate. Lysine 224, lysine 233, and lysine 243 each carry N6-acetyllysine. Aspartate 252 serves as a coordination point for Mn(2+). Lysine 260 serves as a coordination point for NADP(+). Mn(2+) contacts are provided by aspartate 275 and aspartate 279. 310–315 (GTVTRH) provides a ligand contact to NADP(+). Lysine 321 carries the post-translational modification N6-acetyllysine. Position 328 (asparagine 328) interacts with NADP(+). A Phosphoserine modification is found at serine 389. An N6-succinyllysine modification is found at lysine 400.

It belongs to the isocitrate and isopropylmalate dehydrogenases family. Homodimer. Mg(2+) serves as cofactor. Mn(2+) is required as a cofactor. Post-translationally, acetylation at Lys-374 dramatically reduces catalytic activity. Highly expressed in the liver followed by kidney, lower expression in spleen, brain and lung.

It localises to the cytoplasm. Its subcellular location is the cytosol. It carries out the reaction D-threo-isocitrate + NADP(+) = 2-oxoglutarate + CO2 + NADPH. Irreversibly inhibited by Cd(2+) concentrations above 50 uM. Its function is as follows. Catalyzes the NADP(+)-dependent oxidative decarboxylation of isocitrate (D-threo-isocitrate) to 2-ketoglutarate (2-oxoglutarate), which is required by other enzymes such as the phytanoyl-CoA dioxygenase. Plays a critical role in the generation of NADPH, an important cofactor in many biosynthesis pathways. May act as a corneal epithelial crystallin and may be involved in maintaining corneal epithelial transparency. This Mus musculus (Mouse) protein is Isocitrate dehydrogenase [NADP] cytoplasmic (Idh1).